We begin with the raw amino-acid sequence, 256 residues long: 5-oxoprolinase subunit A (256 aa).

This sequence belongs to the LamB/PxpA family. Forms a complex composed of PxpA, PxpB and PxpC.

The catalysed reaction is 5-oxo-L-proline + ATP + 2 H2O = L-glutamate + ADP + phosphate + H(+). In terms of biological role, catalyzes the cleavage of 5-oxoproline to form L-glutamate coupled to the hydrolysis of ATP to ADP and inorganic phosphate. This Geobacillus thermodenitrificans (strain NG80-2) protein is 5-oxoprolinase subunit A.